The following is a 337-amino-acid chain: Ornithine carbamoyltransferase (337 aa).

Carbamoyl phosphate-binding positions include 56 to 59, Gln-83, Arg-107, and 134 to 137; these read STRT and HPTQ. L-ornithine contacts are provided by residues Asn-168, Asp-232, and 236–237; that span reads SM. Carbamoyl phosphate contacts are provided by residues 274 to 275 and Arg-320; that span reads CL.

The protein belongs to the aspartate/ornithine carbamoyltransferase superfamily. OTCase family.

Its subcellular location is the cytoplasm. The enzyme catalyses carbamoyl phosphate + L-ornithine = L-citrulline + phosphate + H(+). The protein operates within amino-acid biosynthesis; L-arginine biosynthesis; L-arginine from L-ornithine and carbamoyl phosphate: step 1/3. In terms of biological role, reversibly catalyzes the transfer of the carbamoyl group from carbamoyl phosphate (CP) to the N(epsilon) atom of ornithine (ORN) to produce L-citrulline. The protein is Ornithine carbamoyltransferase of Shigella flexneri serotype 5b (strain 8401).